The following is a 227-amino-acid chain: Cytidylate kinase (227 aa).

ATP is bound at residue 12–20 (GPSGAGKGT).

Belongs to the cytidylate kinase family. Type 1 subfamily.

The protein localises to the cytoplasm. The enzyme catalyses CMP + ATP = CDP + ADP. It carries out the reaction dCMP + ATP = dCDP + ADP. This is Cytidylate kinase from Salmonella paratyphi A (strain ATCC 9150 / SARB42).